The sequence spans 777 residues: MMSTRTFGETIEEYEVQHLLGKGGFASVYKARCLHSHQDVAIKMIDKKLIQGTGLTSRVRQEVEIHSRLKHPSVLQLYTFFQDVNYVYLVLELAHNGELQRYMKQHLLRPFTESEGATILRQVVAGLLYLHSHNIMHRDISLSNLLLSKEMHIKIADFGLATQLKRPDERHMTMCGTPNYISPEVVSRLSHGLPADVWSVGCMLYTLLVGRPPFETEGVESTLNKVVMSEFMMPSHLSFEAQDLIHKLLKKSPHERITLEQVLRHPFLKRTVGGSSYSTTPGALNEFSQSLASSDSGIVTFASSDSRKSHRLRSVDNSSGQSMPQIMEEYLPSSNLGYDSKEHRPIYEQHGSYLPTPGDQLENRDAKWPGTNNLAPFTSDSDMIPSPVGEKRLLMPPLETKRLQPTRYKTKNAIMSILRTGEVVLEFVKFKVKYNEDRITDICRISEDGRRIIIYQPDPGRGLPIREHPPDPLIPSENCVYNYENLPNKHWKKYVYAARFVGLVKSKTPKITFFSSLGKCQLMETMTDFEVRFYSGAKLLKSSTDGVKVFNSNGAVLSDNGCAEARNLIDHGNECFSHCVNISNALELAQTKENTCFPVTIGRRPAADMHAGQRFDGLRDTTNFAYSTPKSNQGSINFSVSTISTTRSASDYNSNTPRLNMLAAHQNVPIKRITVPEIGIVTELSHGVVQVQFYDGSMVSVIPKVQGGGITYTQANGLSTHFGNNDDLPFAVRDRINQMPQLQMKLKCAPLLGNARSVDCHLMTPKTTTPFYNRMII.

The Protein kinase domain occupies 14–268 (YEVQHLLGKG…LEQVLRHPFL (255 aa)). ATP-binding positions include 20–28 (LGKGGFASV) and K43. Residue D139 is the Proton acceptor of the active site. A compositionally biased stretch (polar residues) spans 371 to 381 (TNNLAPFTSDS). A disordered region spans residues 371-390 (TNNLAPFTSDSDMIPSPVGE). One can recognise a Cryptic POLO box 1 (CPB1) domain in the interval 390–507 (EKRLLMPPLE…ARFVGLVKSK (118 aa)). The region spanning 508-611 (TPKITFFSSL…GRRPAADMHA (104 aa)) is the Cryptic POLO box 2 (CPB2) domain. Residues 669–748 (PIKRITVPEI…MPQLQMKLKC (80 aa)) enclose the POLO box domain.

It belongs to the protein kinase superfamily. Ser/Thr protein kinase family. CDC5/Polo subfamily. Homodimer. Post-translationally, ubiquitinated by the SCF(Slimb) ubiquitin ligase complex; leading to its degradation by the proteasome during interphase and regulating centriole number and ensuring the block to centriole reduplication.

It is found in the cytoplasm. The protein localises to the cytoskeleton. The protein resides in the microtubule organizing center. Its subcellular location is the centrosome. It localises to the centriole. It catalyses the reaction L-seryl-[protein] + ATP = O-phospho-L-seryl-[protein] + ADP + H(+). The catalysed reaction is L-threonyl-[protein] + ATP = O-phospho-L-threonyl-[protein] + ADP + H(+). Its function is as follows. Serine/threonine-protein kinase that plays a central role in centriole duplication. Able to trigger procentriole formation on the surface of the mother centriole cylinder, using mother centriole as a platform, leading to the recruitment of centriole biogenesis proteins such as sas-6. When overexpressed, it is able to induce centrosome amplification through the simultaneous generation of multiple procentrioles adjoining each parental centriole during S phase. Centrosome amplification following overexpression can initiate tumorigenesis, highlighting the importance of centrosome regulation in cancers. In Drosophila persimilis (Fruit fly), this protein is Serine/threonine-protein kinase PLK4 (SAK).